Reading from the N-terminus, the 817-residue chain is V-type proton ATPase subunit a1 (817 aa).

The Cytoplasmic segment spans residues 1–422 (MEEFLDKLPQ…PAVYSVVTYP (422 aa)). Residues 97 to 133 (DIALGDLERQLADHEHEVLEMNSNSEKLRQTYNELLE) are a coiled coil. A helical membrane pass occupies residues 423 to 443 (FLFAVMFGDWGHGLCLLLGAL). The Vacuolar portion of the chain corresponds to 444–468 (YLLARERKLSTQKLGSFMEMLFGGR). Residues 469 to 489 (YVILLMALFSIYCGLIYNEFF) form a helical membrane-spanning segment. Over 490-547 (SVPFHIFGGSAYKCRDTTCSDAYTVGLIKYRDPYPFGVDPSWRGSRTELPYLNSLKMK) the chain is Cytoplasmic. A helical membrane pass occupies residues 548-568 (MSILLGIAQMNLGLILSFFNA). At 569–580 (RFFGSSLDIRYQ) the chain is on the vacuolar side. The helical transmembrane segment at 581-601 (FIPQMIFLNSLFGYLSLLIII) threads the bilayer. The Cytoplasmic segment spans residues 602–639 (KWCTGSQADLYHVMIYMFLSPTEELGENELFWGQRPLQ). The helical transmembrane segment at 640 to 660 (IVLLLLAFIAVPWMLFPKPFA) threads the bilayer. The Vacuolar segment spans residues 661 to 758 (LRKIHMERFQ…VLLLAWGYEN (98 aa)). A helical membrane pass occupies residues 759-779 (ILIRLIGVAVFAFATAFILLM). Over 780–817 (METLSAFLHALRLHWVEFMGKFFNGDGYKFKPFSFALI) the chain is Cytoplasmic.

This sequence belongs to the V-ATPase 116 kDa subunit family. As to quaternary structure, V-ATPase is a heteromultimeric enzyme composed of a peripheral catalytic V1 complex (components A to H) attached to an integral membrane V0 proton pore complex (components: a, c, c'', d and e).

It is found in the vacuole membrane. Its subcellular location is the golgi apparatus. The protein resides in the trans-Golgi network membrane. Essential component of the vacuolar proton pump (V-ATPase), a multimeric enzyme that catalyzes the translocation of protons across the membranes. Required for assembly and activity of the V-ATPase. Required during cell expansion. The sequence is that of V-type proton ATPase subunit a1 from Arabidopsis thaliana (Mouse-ear cress).